The sequence spans 39 residues: MIEPLLCGIVLGLVPITLLGLFVSAWNQYRRGSGMLDMD.

A helical membrane pass occupies residues 5–25; that stretch reads LLCGIVLGLVPITLLGLFVSA.

Belongs to the PetG family. As to quaternary structure, the 4 large subunits of the cytochrome b6-f complex are cytochrome b6, subunit IV (17 kDa polypeptide, PetD), cytochrome f and the Rieske protein, while the 4 small subunits are PetG, PetL, PetM and PetN. The complex functions as a dimer.

Its subcellular location is the cellular thylakoid membrane. Its function is as follows. Component of the cytochrome b6-f complex, which mediates electron transfer between photosystem II (PSII) and photosystem I (PSI), cyclic electron flow around PSI, and state transitions. PetG is required for either the stability or assembly of the cytochrome b6-f complex. The sequence is that of Cytochrome b6-f complex subunit 5 from Prochlorococcus marinus subsp. pastoris (strain CCMP1986 / NIES-2087 / MED4).